The following is a 138-amino-acid chain: ATP synthase epsilon chain, chloroplastic (138 aa).

It belongs to the ATPase epsilon chain family. F-type ATPases have 2 components, CF(1) - the catalytic core - and CF(0) - the membrane proton channel. CF(1) has five subunits: alpha(3), beta(3), gamma(1), delta(1), epsilon(1). CF(0) has three main subunits: a, b and c.

Its subcellular location is the plastid. The protein localises to the chloroplast thylakoid membrane. Its function is as follows. Produces ATP from ADP in the presence of a proton gradient across the membrane. The chain is ATP synthase epsilon chain, chloroplastic from Huperzia lucidula (Shining clubmoss).